Consider the following 364-residue polypeptide: Lysophosphatidic acid receptor 1 (364 aa).

The Extracellular portion of the chain corresponds to 1 to 50 (MAAISTSIPVISQPQFTAMNEPQCFYNESIAFFYNRSGKHLATEWNTVSK). 2 cysteine pairs are disulfide-bonded: cysteine 24/cysteine 190 and cysteine 188/cysteine 195. 2 N-linked (GlcNAc...) asparagine glycosylation sites follow: asparagine 27 and asparagine 35. Position 39 (lysine 39) interacts with a 1-acyl-sn-glycero-3-phosphate. Residues 51 to 75 (LVMGLGITVCIFIMLANLLVMVAIY) traverse the membrane as a helical segment. Over 76-83 (VNRRFHFP) the chain is Cytoplasmic. The chain crosses the membrane as a helical span at residues 84-107 (IYYLMANLAAADFFAGLAYFYLMF). Over 108–121 (NTGPNTRRLTVSTW) the chain is Extracellular. The helical transmembrane segment at 122-144 (LLRQGLIDTSLTASVANLLAIAI) threads the bilayer. Residue 124–129 (RQGLID) coordinates a 1-acyl-sn-glycero-3-phosphate. The Cytoplasmic portion of the chain corresponds to 145 to 163 (ERHITVFRMQLHTRMSNRR). A helical transmembrane segment spans residues 164 to 184 (VVVVIVVIWTMAIVMGAIPSV). Over 185–204 (GWNCICDIENCSNMAPLYSD) the chain is Extracellular. Residues 205-225 (SYLVFWAIFNLVTFVVMVVLY) traverse the membrane as a helical segment. Residue tryptophan 210 participates in a 1-acyl-sn-glycero-3-phosphate binding. Residues 226 to 255 (AHIFGYVRQRTMRMSRHSSGPRRNRDTMMS) are Cytoplasmic-facing. Residues 256 to 280 (LLKTVVIVLGAFIICWTPGLVLLLL) form a helical membrane-spanning segment. The Extracellular segment spans residues 281–294 (DVCCPQCDVLAYEK). Cysteine 284 and cysteine 287 form a disulfide bridge. Residues 295–315 (FFLLLAEFNSAMNPIIYSYRD) traverse the membrane as a helical segment. At 316 to 364 (KEMSATFRQILCCQRSENPTGPTEGSDRSASSLNHTILAGVHSNDHSVV) the chain is on the cytoplasmic side. Position 341 is a phosphoserine (serine 341). Threonine 351 is modified (phosphothreonine).

It belongs to the G-protein coupled receptor 1 family. In terms of assembly, interacts with RALA and GRK2. Interacts with GNAQ and GNA13. Interacts with CD14; the interaction is enhanced by exposure to bacterial lipopolysaccharide (LPS). In terms of processing, N-glycosylated. In terms of tissue distribution, expressed in many adult organs, including brain, heart, colon, small intestine, placenta, prostate, ovary, pancreas, testes, spleen, skeletal muscle, and kidney. Little or no expression in liver, lung, thymus, or peripheral blood leukocytes. Detected in lung fibroblasts from bronchoalveolar fluid from patients with idiopathic pulmonary fibrosis. Detected in bone marrow-derived mesenchymal stem cells.

The protein localises to the cell surface. The protein resides in the cell membrane. Its subcellular location is the endosome. Its function is as follows. Receptor for lysophosphatidic acid (LPA). Plays a role in the reorganization of the actin cytoskeleton, cell migration, differentiation and proliferation, and thereby contributes to the responses to tissue damage and infectious agents. Activates downstream signaling cascades via the G(i)/G(o), G(12)/G(13), and G(q) families of heteromeric G proteins. Signaling inhibits adenylyl cyclase activity and decreases cellular cAMP levels. Signaling triggers an increase of cytoplasmic Ca(2+) levels. Activates RALA; this leads to the activation of phospholipase C (PLC) and the formation of inositol 1,4,5-trisphosphate. Signaling mediates activation of down-stream MAP kinases. Contributes to the regulation of cell shape. Promotes Rho-dependent reorganization of the actin cytoskeleton in neuronal cells and neurite retraction. Promotes the activation of Rho and the formation of actin stress fibers. Promotes formation of lamellipodia at the leading edge of migrating cells via activation of RAC1. Through its function as LPA receptor, plays a role in chemotaxis and cell migration, including responses to injury and wounding. Plays a role in triggering inflammation in response to bacterial lipopolysaccharide (LPS) via its interaction with CD14. Promotes cell proliferation in response to LPA. Inhibits the intracellular ciliogenesis pathway in response to LPA and through AKT1 activation. Required for normal skeleton development. May play a role in osteoblast differentiation. Required for normal brain development. Required for normal proliferation, survival and maturation of newly formed neurons in the adult dentate gyrus. Plays a role in pain perception and in the initiation of neuropathic pain. In Homo sapiens (Human), this protein is Lysophosphatidic acid receptor 1 (LPAR1).